The chain runs to 396 residues: Elongation factor Tu (396 aa).

A tr-type G domain is found at 10–206; the sequence is KPHCNIGTIG…AVDAYIPQPE (197 aa). The interval 19–26 is G1; that stretch reads GHVDHGKT. Residue 19–26 coordinates GTP; that stretch reads GHVDHGKT. T26 is a Mg(2+) binding site. Residues 60-64 are G2; it reads GITIS. The G3 stretch occupies residues 81–84; it reads DCPG. GTP-binding positions include 81–85 and 136–139; these read DCPGH and NKCD. Positions 136-139 are G4; that stretch reads NKCD. The G5 stretch occupies residues 174–176; the sequence is SAL.

This sequence belongs to the TRAFAC class translation factor GTPase superfamily. Classic translation factor GTPase family. EF-Tu/EF-1A subfamily. Monomer.

It is found in the cytoplasm. The enzyme catalyses GTP + H2O = GDP + phosphate + H(+). Functionally, GTP hydrolase that promotes the GTP-dependent binding of aminoacyl-tRNA to the A-site of ribosomes during protein biosynthesis. This Rhodopseudomonas palustris (strain BisB18) protein is Elongation factor Tu.